A 70-amino-acid chain; its full sequence is Translation initiation factor IF-1 (70 aa).

Residues 1–70 form the S1-like domain; sequence MKETNLSIKG…LTKGRIIYRH (70 aa).

Belongs to the IF-1 family. Component of the 30S ribosomal translation pre-initiation complex which assembles on the 30S ribosome in the order IF-2 and IF-3, IF-1 and N-formylmethionyl-tRNA(fMet); mRNA recruitment can occur at any time during PIC assembly.

The protein resides in the cytoplasm. Its function is as follows. One of the essential components for the initiation of protein synthesis. Stabilizes the binding of IF-2 and IF-3 on the 30S subunit to which N-formylmethionyl-tRNA(fMet) subsequently binds. Helps modulate mRNA selection, yielding the 30S pre-initiation complex (PIC). Upon addition of the 50S ribosomal subunit IF-1, IF-2 and IF-3 are released leaving the mature 70S translation initiation complex. This Mycoplasmoides gallisepticum (strain R(low / passage 15 / clone 2)) (Mycoplasma gallisepticum) protein is Translation initiation factor IF-1.